The chain runs to 379 residues: Queuine tRNA-ribosyltransferase (379 aa).

Residue aspartate 93 is the Proton acceptor of the active site. Residues aspartate 93–phenylalanine 97, aspartate 147, glutamine 191, and glycine 218 contribute to the substrate site. The RNA binding stretch occupies residues glycine 249–aspartate 255. Residue aspartate 268 is the Nucleophile of the active site. Positions threonine 273–arginine 277 are RNA binding; important for wobble base 34 recognition. Cysteine 306, cysteine 308, cysteine 311, and histidine 337 together coordinate Zn(2+).

This sequence belongs to the queuine tRNA-ribosyltransferase family. In terms of assembly, homodimer. Within each dimer, one monomer is responsible for RNA recognition and catalysis, while the other monomer binds to the replacement base PreQ1. The cofactor is Zn(2+).

It carries out the reaction 7-aminomethyl-7-carbaguanine + guanosine(34) in tRNA = 7-aminomethyl-7-carbaguanosine(34) in tRNA + guanine. It functions in the pathway tRNA modification; tRNA-queuosine biosynthesis. Its function is as follows. Catalyzes the base-exchange of a guanine (G) residue with the queuine precursor 7-aminomethyl-7-deazaguanine (PreQ1) at position 34 (anticodon wobble position) in tRNAs with GU(N) anticodons (tRNA-Asp, -Asn, -His and -Tyr). Catalysis occurs through a double-displacement mechanism. The nucleophile active site attacks the C1' of nucleotide 34 to detach the guanine base from the RNA, forming a covalent enzyme-RNA intermediate. The proton acceptor active site deprotonates the incoming PreQ1, allowing a nucleophilic attack on the C1' of the ribose to form the product. After dissociation, two additional enzymatic reactions on the tRNA convert PreQ1 to queuine (Q), resulting in the hypermodified nucleoside queuosine (7-(((4,5-cis-dihydroxy-2-cyclopenten-1-yl)amino)methyl)-7-deazaguanosine). This chain is Queuine tRNA-ribosyltransferase, found in Mannheimia succiniciproducens (strain KCTC 0769BP / MBEL55E).